Here is a 230-residue protein sequence, read N- to C-terminus: Androgen-dependent TFPI-regulating protein (230 aa).

Topologically, residues 1-7 (MTKTTTC) are cytoplasmic. Residues 8–28 (LYHFVVLNWYIFLNYYIPQIG) traverse the membrane as a helical segment. Topologically, residues 29 to 45 (KDEEKLKEFHDGGRSKY) are extracellular. The chain crosses the membrane as a helical span at residues 46–66 (LTLLNLLLQAVFFGVACLDDV). At 67 to 85 (LKRVIGRKDIKFITYFRDL) the chain is on the cytoplasmic side. Residues 86–106 (LFTTLAFPLSTFVFLVFWSLF) traverse the membrane as a helical segment. Residues 107–120 (HYDRSLVYPKGLDD) lie on the Extracellular side of the membrane. Residues 121-141 (FFPAWVNHAMHTSIFPFSLAE) traverse the membrane as a helical segment. The Cytoplasmic segment spans residues 142-155 (TVLRPHNYPSKKLG). A helical transmembrane segment spans residues 156 to 173 (LSLLGACNFAYIIRILWR). Over 174-190 (YVQTGNWVYPVFASLSP) the chain is Extracellular. The chain crosses the membrane as a helical span at residues 191 to 211 (LGIILFFSASYILSASLYLFG). Topologically, residues 212-230 (EKINHWKWGATVKPRMKKN) are cytoplasmic.

This sequence belongs to the AIG1 family.

The protein resides in the cell membrane. It catalyses the reaction 9-hexadecanoyloxy-octadecanoate + H2O = 9-hydroxy-octadecanoate + hexadecanoate + H(+). The enzyme catalyses 12-hexadecanoyloxy-octadecanoate + H2O = 12-hydroxyoctadecanoate + hexadecanoate + H(+). The catalysed reaction is 9-(9Z-hexadecenoyloxy)-octadecanoate + H2O = (9Z)-hexadecenoate + 9-hydroxy-octadecanoate + H(+). It carries out the reaction 12-(9Z-hexadecenoyloxy)-octadecanoate + H2O = 12-hydroxyoctadecanoate + (9Z)-hexadecenoate + H(+). It catalyses the reaction 13-(9Z-hexadecenoyloxy)-octadecanoate + H2O = 13-hydroxy-octadecanoate + (9Z)-hexadecenoate + H(+). The enzyme catalyses 9-octadecanoyloxy-octadecanoate + H2O = 9-hydroxy-octadecanoate + octadecanoate + H(+). The catalysed reaction is 12-octadecanoyloxy-octadecanoate + H2O = 12-hydroxyoctadecanoate + octadecanoate + H(+). It carries out the reaction 13-octadecanoyloxy-octadecanoate + H2O = 13-hydroxy-octadecanoate + octadecanoate + H(+). It catalyses the reaction 9-(9Z-octadecenoyloxy)-octadecanoate + H2O = 9-hydroxy-octadecanoate + (9Z)-octadecenoate + H(+). The enzyme catalyses 12-(9Z-octadecenoyloxy)-octadecanoate + H2O = 12-hydroxyoctadecanoate + (9Z)-octadecenoate + H(+). The catalysed reaction is 13-(9Z-octadecenoyloxy)-octadecanoate + H2O = 13-hydroxy-octadecanoate + (9Z)-octadecenoate + H(+). It carries out the reaction 5-(9Z-octadecenoyloxy)-octadecanoate + H2O = 5-hydroxy-octadecanoate + (9Z)-octadecenoate + H(+). Hydrolyzes bioactive fatty-acid esters of hydroxy-fatty acids (FAHFAs), but not other major classes of lipids. Shows a preference for FAHFAs with branching distal from the carboxylate head group of the lipids. Regulates the expression and the cell-associated anticoagulant activity of the inhibitor TFPI in endothelial cells (in vitro). In Rattus norvegicus (Rat), this protein is Androgen-dependent TFPI-regulating protein (Adtrp).